Reading from the N-terminus, the 3189-residue chain is Beauvericin nonribosomal cyclodepsipeptide synthetase (3189 aa).

The interval 73-466 (HAMYEISQHV…EQLQSAADDA (394 aa)) is condensation 1. A disordered region spans residues 202-223 (DSLPLTPDSSGGSDSDSPSTLK). The span at 208-220 (PDSSGGSDSDSPS) shows a compositional bias: low complexity. An adenylation 1 region spans residues 507–901 (AESPSDPAVL…GRIDSQVKIR (395 aa)). One can recognise a Carrier 1 domain in the interval 1036 to 1112 (TLETGPEARL…RLQAVMSGDS (77 aa)). The residue at position 1073 (Ser1073) is an O-(pantetheine 4'-phosphoryl)serine. The interval 1136–1569 (SYSQGRLWFL…KSLISVLPLT (434 aa)) is condensation 2. The adenylation 2 stretch occupies residues 1599-2004 (FRSQVATCPD…GRMDFQFKIR (406 aa)). The interval 2072–2211 (MYNGIDAISP…FPTVEYLTRV (140 aa)) is S-adenosyl-L-methionine-dependent N-methyltransferase. 2 Carrier domains span residues 2557-2631 (CPIS…REGL) and 2654-2728 (APRN…ELGQ). O-(pantetheine 4'-phosphoryl)serine occurs at positions 2591 and 2688. The tract at residues 2773–3181 (QDVYPATHMQ…AYLMEEVCRL (409 aa)) is condensation 3.

The protein belongs to the NRP synthetase family.

It catalyses the reaction 3 (R)-2-hydroxy-3-methylbutanoate + 3 L-phenylalanine + 3 S-adenosyl-L-methionine + 6 ATP = beauvericin + 6 AMP + 3 S-adenosyl-L-homocysteine + 6 diphosphate + 6 H(+). Beauvericin nonribosomal cyclodepsipeptide synthetase; part of the gene cluster that mediates the biosynthesis of beauvericin (BEA), a non-ribosomal cyclic hexadepsipeptide that shows antibiotic, antifungal, insecticidal, and cancer cell antiproliferative and antihaptotactic activity. Ketoisovalerate reductase BEA2 catalyzes the NADPH-specific reduction of ketoisovaleric acid to hydroxyisovalerate, a precursor for beauvericin biosynthesis. The nonribosomal cyclodepsipeptide synthetase BEA1 then catalyzes the formation of beauvericin via condensation and cyclization of 3 dipeptidol monomers, each composed of one unit of hydroxyisovalerate and one unit of N-methyl-phenylalanine. The chain is Beauvericin nonribosomal cyclodepsipeptide synthetase (Beas) from Beauveria bassiana (White muscardine disease fungus).